The sequence spans 378 residues: Phosphoserine aminotransferase (378 aa).

Arg53 contributes to the L-glutamate binding site. Trp117, Thr167, Asp190, and Gln213 together coordinate pyridoxal 5'-phosphate. The residue at position 214 (Lys214) is an N6-(pyridoxal phosphate)lysine. Pyridoxal 5'-phosphate is bound at residue 255–256 (NT).

This sequence belongs to the class-V pyridoxal-phosphate-dependent aminotransferase family. SerC subfamily. Homodimer. Pyridoxal 5'-phosphate serves as cofactor.

The protein localises to the cytoplasm. It carries out the reaction O-phospho-L-serine + 2-oxoglutarate = 3-phosphooxypyruvate + L-glutamate. The enzyme catalyses 4-(phosphooxy)-L-threonine + 2-oxoglutarate = (R)-3-hydroxy-2-oxo-4-phosphooxybutanoate + L-glutamate. It participates in amino-acid biosynthesis; L-serine biosynthesis; L-serine from 3-phospho-D-glycerate: step 2/3. It functions in the pathway cofactor biosynthesis; pyridoxine 5'-phosphate biosynthesis; pyridoxine 5'-phosphate from D-erythrose 4-phosphate: step 3/5. Its function is as follows. Catalyzes the reversible conversion of 3-phosphohydroxypyruvate to phosphoserine and of 3-hydroxy-2-oxo-4-phosphonooxybutanoate to phosphohydroxythreonine. This chain is Phosphoserine aminotransferase, found in Ralstonia pickettii (strain 12J).